Consider the following 391-residue polypeptide: Putative gustatory receptor 98a (391 aa).

The Cytoplasmic segment spans residues 1–31 (MEQMSGELHAASLLYMRRLMKCLGMLPFGQN). The chain crosses the membrane as a helical span at residues 32-52 (LFSKGFCYVLLFVSLGFSSYW). The Extracellular portion of the chain corresponds to 53–74 (RFSFDYEFDYDFLNDRFSSTID). A helical transmembrane segment spans residues 75–95 (LSNFVALVLGHAIIVLELLWG). The Cytoplasmic segment spans residues 96–128 (NCSKDVDRQLQAIHSQIKLQLGTSNSTDRVRRY). A helical membrane pass occupies residues 129–149 (CNWIYGSLIIRWLIFIVVTIY). Over 150–173 (SNRALTINATYSELVFLARFSEFT) the chain is Extracellular. A glycan (N-linked (GlcNAc...) asparagine) is linked at Asn157. Residues 174–194 (LYCAVILFIYQELIVGGSNVL) traverse the membrane as a helical segment. Topologically, residues 195-239 (DELYRTRYEMWSIRRLSLQKLAKLQAIHNSLWQAIRCLECYFQLS) are cytoplasmic. A helical transmembrane segment spans residues 240 to 260 (LITLLMKFFIDTSALPYWLYL). Topologically, residues 261–272 (SRVEHTRVAVQH) are extracellular. Residues 273 to 293 (YVATVECIKLLEIVVPCYLCT) form a helical membrane-spanning segment. At 294 to 347 (RCDAMQRKFLSMFYTVTTDRRSSQLNAALRSLNLQLSQEKYKFSAGGMVDINTE) the chain is on the cytoplasmic side. The helical transmembrane segment at 348–368 (MLGKFFFGMISYIVICIQFSI) threads the bilayer. The Extracellular portion of the chain corresponds to 369–391 (NFRAKKMSNEQMSQNITSTSAPI). Asn383 is a glycosylation site (N-linked (GlcNAc...) asparagine).

Belongs to the insect chemoreceptor superfamily. Gustatory receptor (GR) family. Gr2a subfamily.

It is found in the cell membrane. Its function is as follows. Probable gustatory receptor which mediates acceptance or avoidance behavior, depending on its substrates. This Drosophila melanogaster (Fruit fly) protein is Putative gustatory receptor 98a (Gr98a).